A 73-amino-acid polypeptide reads, in one-letter code: Protein RALF-like 10 (73 aa).

The first 17 residues, 1 to 17 (MKALVICLLVIFAAVIA), serve as a signal peptide directing secretion. 2 disulfide bridges follow: cysteine 35–cysteine 44 and cysteine 64–cysteine 70.

This sequence belongs to the plant rapid alkalinization factor (RALF) family. In terms of tissue distribution, expressed in flowers.

It localises to the secreted. Functionally, cell signaling peptide that may regulate plant stress, growth, and development. Mediates a rapid alkalinization of extracellular space by mediating a transient increase in the cytoplasmic Ca(2+) concentration leading to a calcium-dependent signaling events through a cell surface receptor and a concomitant activation of some intracellular mitogen-activated protein kinases. This chain is Protein RALF-like 10 (RALFL10), found in Arabidopsis thaliana (Mouse-ear cress).